We begin with the raw amino-acid sequence, 185 residues long: Small ribosomal subunit protein bS6 (185 aa).

Over residues 115–141 the composition is skewed to basic and acidic residues; that stretch reads AAQKAAAEKAEAARLEAEKAAEEEAAK. The disordered stretch occupies residues 115–185; sequence AAQKAAAEKA…EEPKSDEEDA (71 aa). The segment covering 142–169 has biased composition (low complexity); it reads AAEAQAKEAPAAEAPAEEAPAAEAPAEA. A compositionally biased stretch (acidic residues) spans 170–185; sequence PAEEPAEEPKSDEEDA.

It belongs to the bacterial ribosomal protein bS6 family.

Its function is as follows. Binds together with bS18 to 16S ribosomal RNA. This is Small ribosomal subunit protein bS6 from Desulfatibacillum aliphaticivorans.